A 417-amino-acid chain; its full sequence is UDP-N-acetylglucosamine 1-carboxyvinyltransferase (417 aa).

22–23 provides a ligand contact to phosphoenolpyruvate; sequence KN. Arginine 93 provides a ligand contact to UDP-N-acetyl-alpha-D-glucosamine. Cysteine 117 serves as the catalytic Proton donor. Cysteine 117 bears the 2-(S-cysteinyl)pyruvic acid O-phosphothioketal mark. Residues 122-126, aspartate 304, and isoleucine 326 contribute to the UDP-N-acetyl-alpha-D-glucosamine site; that span reads RPVDQ.

It belongs to the EPSP synthase family. MurA subfamily.

Its subcellular location is the cytoplasm. It catalyses the reaction phosphoenolpyruvate + UDP-N-acetyl-alpha-D-glucosamine = UDP-N-acetyl-3-O-(1-carboxyvinyl)-alpha-D-glucosamine + phosphate. The protein operates within cell wall biogenesis; peptidoglycan biosynthesis. Its function is as follows. Cell wall formation. Adds enolpyruvyl to UDP-N-acetylglucosamine. This chain is UDP-N-acetylglucosamine 1-carboxyvinyltransferase, found in Neisseria meningitidis serogroup C (strain 053442).